Reading from the N-terminus, the 390-residue chain is Chorismate synthase 2 (390 aa).

NADP(+) contacts are provided by arginine 39 and arginine 45. Residues 132 to 134, 253 to 254, glycine 298, 313 to 317, and arginine 339 contribute to the FMN site; these read RSS, NA, and KPIPT.

This sequence belongs to the chorismate synthase family. In terms of assembly, homotetramer. Requires FMNH2 as cofactor.

The enzyme catalyses 5-O-(1-carboxyvinyl)-3-phosphoshikimate = chorismate + phosphate. Its pathway is metabolic intermediate biosynthesis; chorismate biosynthesis; chorismate from D-erythrose 4-phosphate and phosphoenolpyruvate: step 7/7. Catalyzes the anti-1,4-elimination of the C-3 phosphate and the C-6 proR hydrogen from 5-enolpyruvylshikimate-3-phosphate (EPSP) to yield chorismate, which is the branch point compound that serves as the starting substrate for the three terminal pathways of aromatic amino acid biosynthesis. This reaction introduces a second double bond into the aromatic ring system. This Bacillus thuringiensis (strain Al Hakam) protein is Chorismate synthase 2.